Here is a 433-residue protein sequence, read N- to C-terminus: Adenylosuccinate synthetase (433 aa).

GTP is bound by residues Gly18–Lys24 and Gly46–Thr48. The active-site Proton acceptor is the Asp19. Positions 19 and 46 each coordinate Mg(2+). IMP-binding positions include Asp19–Lys22, Asn44–His47, Thr136, Arg150, Gln229, Thr244, and Arg308. The Proton donor role is filled by His47. A substrate-binding site is contributed by Val304 to Arg310. GTP contacts are provided by residues Arg310, Lys336–Asp338, and Gly420–Gly422.

It belongs to the adenylosuccinate synthetase family. In terms of assembly, homodimer. Requires Mg(2+) as cofactor.

The protein resides in the cytoplasm. It catalyses the reaction IMP + L-aspartate + GTP = N(6)-(1,2-dicarboxyethyl)-AMP + GDP + phosphate + 2 H(+). The protein operates within purine metabolism; AMP biosynthesis via de novo pathway; AMP from IMP: step 1/2. Its function is as follows. Plays an important role in the de novo pathway and in the salvage pathway of purine nucleotide biosynthesis. Catalyzes the first committed step in the biosynthesis of AMP from IMP. The polypeptide is Adenylosuccinate synthetase (Schistosoma japonicum (Blood fluke)).